Consider the following 264-residue polypeptide: Versicolorin reductase stcU (264 aa).

4 residues coordinate NADP(+): Ile23, Asp69, Asn96, and Arg129. Active-site proton donor residues include Ser145 and Ser146. NADP(+)-binding residues include Tyr160, Lys164, Ile193, and Thr195. Tyr160 serves as the catalytic Proton acceptor. The Lowers pKa of active site Tyr role is filled by Lys164.

The protein belongs to the short-chain dehydrogenases/reductases (SDR) family.

The catalysed reaction is (4S,8R)-2,13,16,20-tetrahydroxy-7,9-dioxapentacyclo[10.8.0.0(3,10).0(4,8).0(14,19)]icosa-1(12),2,5,10,13,16,19-heptaen-18-one + NADPH + H(+) = (4S,8R,16R)-2,13,16,20-tetrahydroxy-7,9-dioxapentacyclo[10.8.0.0(3,10).0(4,8).0(14,19)]icosa-1(12),2,5,10,13,19-hexaen-18-one + NADP(+). It functions in the pathway mycotoxin biosynthesis; sterigmatocystin biosynthesis. In terms of biological role, versicolorin reductase; part of the gene cluster that mediates the biosynthesis of sterigmatocystin (ST), a polyketide-derived furanocoumarin which is part of the most toxic and carcinogenic compounds among the known mycotoxins. The first step in the biosynthesis of sterigmatocystin is the production of hexanoate by the fatty acid synthase (FAS) units stcJ and stcK. The polyketide backbone is assembled by the non-reducing polyketide synthase stcA by condensation of the starter hexanoyl-CoA and 7 malonyl-CoA extender units followed by cyclization and release of norsolorinic acid. Norsolorinic acid is the first stable intermediate in the biosynthesis of sterigmatocystin and is converted into averantin (AVN) by the ketoreductase stcE which reduces the hexanoate ketone to an alcohol. Averantin is then oxidized into 5'-hydroxyaverantin (HAVN) by the cytochrome P450 monooxygenase stcF. 5'-hydroxyaverantin is further converted to 5'-oxyaverantin (OAVN) by the 5'-hydroxyaverantin dehydrogenase stcG. The next step is the conversion of OAVN into averufin (AVF) which is catalyzed by a yet to be identified enzyme. The cytochrome P450 monooxygenase stcB and the flavin-binding monooxygenase stcW are both required for the conversion of averufin to 1-hydroxyversicolorone. The esterase stcI probably catalyzes the formation of versiconal hemiacetal acetate from 1-hydroxyversicolorone. The oxydoreductase stcN then probably catalyzes the biosynthetic step from versiconal to versicolorin B (VERB). The next step is performed by the versicolorin B desaturase stcL to produce versicolorin A (VERA). The ketoreductase stcU and the cytochrome P450 monooxygenase stcS are involved in the conversion of versicolorin A to demethylsterigmatocystin. The Baeyer-Villiger oxidas stcQ and the reductase stcR might be involved in the biosynthetic step from versicolorin A to demethylsterigmatocystin. The final step in the biosynthesis of sterigmatocystin is the methylation of demethylsterigmatocystin catalyzed by the methyltransferase stcP. The polypeptide is Versicolorin reductase stcU (Emericella nidulans (strain FGSC A4 / ATCC 38163 / CBS 112.46 / NRRL 194 / M139) (Aspergillus nidulans)).